The following is a 787-amino-acid chain: Endonuclease MutS2 (787 aa).

Residue 331–338 (GPNTGGKT) participates in ATP binding. Residues 711 to 786 (IDVRGKTSDD…EQGVTIVELR (76 aa)) form the Smr domain.

Belongs to the DNA mismatch repair MutS family. MutS2 subfamily. As to quaternary structure, homodimer. Binds to stalled ribosomes, contacting rRNA.

Endonuclease that is involved in the suppression of homologous recombination and thus may have a key role in the control of bacterial genetic diversity. Its function is as follows. Acts as a ribosome collision sensor, splitting the ribosome into its 2 subunits. Detects stalled/collided 70S ribosomes which it binds and splits by an ATP-hydrolysis driven conformational change. Acts upstream of the ribosome quality control system (RQC), a ribosome-associated complex that mediates the extraction of incompletely synthesized nascent chains from stalled ribosomes and their subsequent degradation. Probably generates substrates for RQC. This is Endonuclease MutS2 from Caldicellulosiruptor saccharolyticus (strain ATCC 43494 / DSM 8903 / Tp8T 6331).